The sequence spans 520 residues: F-box/LRR-repeat protein At3g59200 (520 aa).

The F-box domain occupies 6 to 54 (RDRISSLPNPVVSHILSFLPTKEAASTSVLSKKWRYLFAYVTNLDFDDS). LRR repeat units lie at residues 170-197 (CVDV…VLMN), 219-244 (FCEE…EYSD), and 340-365 (NSEI…VLKR).

The polypeptide is F-box/LRR-repeat protein At3g59200 (Arabidopsis thaliana (Mouse-ear cress)).